The chain runs to 211 residues: UPF0637 protein BLi01683/BL05149 (211 aa).

This sequence belongs to the UPF0637 family.

The protein is UPF0637 protein BLi01683/BL05149 of Bacillus licheniformis (strain ATCC 14580 / DSM 13 / JCM 2505 / CCUG 7422 / NBRC 12200 / NCIMB 9375 / NCTC 10341 / NRRL NRS-1264 / Gibson 46).